The following is a 482-amino-acid chain: MGDAESTSKTSLLLPVERVENVTWRDLRDGLFTAELKRLICFAAPMAAVVIAQFMLQIISMVMVGHLGNLSLASASLASSFCNVTGFSFIVGLSCALDTLSGQAYGAKLYRKVGVQTYTAMFCLALVCLPLTLIWLNMETLLVFLGQDPSIAHEAGRYAACLIPGLFAYAVLQPLTRYFQNQSMITPLLITSCFVFCLHVPLCWLLVYKSGLGNLGGALALSFSNCLYTIILGSLMCFSSACSETRAPLSMEIFDGIGEFFRYALPSAAMICLEWWSYELIILLSGLLPNPQLETSVLSVCLQTTATVYSIHLAIAAAASTRISNELGAGNSRAANIVVYAAMSLAVVEILILSTSLLVGRNVFGHVFSSDKETIDYVAKMAPLVSISLILDGLQGVLSGIARGCGWQHIGAYINLGAFYLWGIPIAASLAFWIHLKGVGLWIGIQAGAVLQTLLLTLVTGCTNWESQADKARNRMALAYGT.

Helical transmembrane passes span 39–59 (LICF…LQII), 77–97 (LASS…SCAL), 124–144 (LALV…LLVF), 159–179 (AACL…TRYF), 188–208 (LLIT…LLVY), 218–238 (ALAL…LMCF), 268–288 (AAMI…SGLL), 297–317 (VLSV…AIAA), 337–357 (IVVY…STSL), 381–401 (MAPL…LSGI), 416–436 (LGAF…WIHL), and 439–459 (VGLW…LTLV).

The protein belongs to the multi antimicrobial extrusion (MATE) (TC 2.A.66.1) family.

It is found in the membrane. This Arabidopsis thaliana (Mouse-ear cress) protein is Protein DETOXIFICATION 13.